Consider the following 769-residue polypeptide: MQKPGQNIDFALKETSPKIGAGSVTGDKLCSTYDLVEQMHYLYVRVVKAKELPGKDVTGSCDPYVEVKLGNYRGMTKHFEKRSNPEWKQVFAFSKERIQASILEVVVKDKDVVLDDLIGRIMFDLNEIPKRVPPDSPLAPQWYRLEDRHGRKVKGELMLAVWMGTQADEAFSDAWHSDAATVGPEGVTHIRSKVYLSPKLWYVRVNVIEAQDLIPHDKTKFPEVYVKAMLGNQTLRTRISQTKTLNPMWNEDLMFVVAEPFEEALILAVEDRVAPNKDETLGRCAIPLQNVQRRLDHRPLNSRWFNLEKHIMVEGEQKEIKFASRIHLRIFLEGGYHVLDESTHYSSDLRPTAKQLWKPSIGLLEVGIISAHGLMPMKSKDGKGTTDAYCVAKYGQKWIRTRTIVDSFTPKWNEQYTWEVFDTCTVITFGAFDNGHIPGGSGKDLRIGKVRIRLSTLEADRIYTHSYPLLVFHPSGIKKTGEIQLAVRFTCLSLINMLHMYSQPLLPKMHYIHPLSVLQLDSLRHQAMNIVSARLNRAEPPLRKEIVEYMLDVDSHMWSMRRSKANFFRIMNVLSGLIAVGKWFDQICNWRNPITTILIHVLFIILVLYPELILPTVFLYLFLIGIWNFRWRPRHPPHMDTRLSHADAVHPDELDEEFDTFPTSRSSEIVRMRYDRLRSIGGRVQTVIGDLATQGERFLSLLSWRDPRATTLFVLFCLIAAIVLYVTPFQVVALLAGIYVLRHPRFRHKLPSVPLNLFRRLPARSDSLL.

3 C2 domains span residues 23–143, 184–305, and 345–467; these read SVTG…PQWY, PEGV…SRWF, and YSSD…THSY. Positions 56, 62, 109, 111, and 116 each coordinate Ca(2+). Helical transmembrane passes span 604–624 and 712–732; these read IILV…LFLI and LFVL…FQVV.

This sequence belongs to the MCTP family. Ca(2+) is required as a cofactor. Highly expressed in roots meristems and shoot apical meristems (SAMs). Observed in flowers.

It is found in the endoplasmic reticulum membrane. Functionally, may function as a signaling molecule by regulating the trafficking of other regulators. This is Multiple C2 domain and transmembrane region protein 5 from Arabidopsis thaliana (Mouse-ear cress).